Consider the following 121-residue polypeptide: uncharacterized protein (121 aa).

This is an uncharacterized protein from Escherichia coli (strain K12).